A 199-amino-acid chain; its full sequence is Fe/S biogenesis protein NfuA (199 aa).

Positions 151 and 154 each coordinate [4Fe-4S] cluster.

It belongs to the NfuA family. Homodimer. It depends on [4Fe-4S] cluster as a cofactor.

Involved in iron-sulfur cluster biogenesis. Binds a 4Fe-4S cluster, can transfer this cluster to apoproteins, and thereby intervenes in the maturation of Fe/S proteins. Could also act as a scaffold/chaperone for damaged Fe/S proteins. This chain is Fe/S biogenesis protein NfuA, found in Xanthomonas euvesicatoria pv. vesicatoria (strain 85-10) (Xanthomonas campestris pv. vesicatoria).